Consider the following 652-residue polypeptide: MNNIKSFFGKKKKTQDQAEPLVIGDDSEKRTVILPPPSPNAVKRKNKNEKPYSIDLNGVGEVGGKVYNNVVGVFADGNDTGEISPTIYCVSDFQGLLKNDRKWIQYSELPEGYTVFYFQTILCVLNFLRRREFVHYIYVDKFEQILEMNENNENIITTVIPTNPIDENDKINSKSINDGDDNGGGSGGGGDNSPLTNVILPTITTTDTTTTSITISPPPKNHLSLLEEDIKNNQNLHHKQQQLQQLQQLKQQHLQQQQKLKQEQQQEQQQQQEDEPNKSPVSTSSTLSPQLESTNFEMTNDDTSLNAPNAMLTPNNISGISYSIIYPGKKKRIDFSRIFVSPGHSFRFPEEYDKALEKHLNEGNPKEHFKNLDFEARGGFGSVFCAKNKNPHSAYDKQMVALKKMPIKTLRHKRMNLSEIGFLKYFNHPNIVKFLCAYQKSNDELWMIMEFLSGGTLKNAASNFKFCERKIAYVCREILQGLDYLHKQNIAHRDLKSANVMVNDKGEIKLIDFGLCIDFSIEKEEINMLGSPSYISPEMINGNPHSLSTDIWSFGICALEMLLGKLPYHDSRLKAMVFVATNNLNLPLLLSTTTSSLEFRDFLTNCLQFDPSKRLTSSQLLQHPFLTKACPIKDFKEILPALYMSNTLSNMF.

3 disordered regions span residues 1–47 (MNNI…RKNK), 163–198 (NPID…LTNV), and 257–289 (QQKL…TLSP). The span at 182–191 (NGGGSGGGGD) shows a compositional bias: gly residues. Residues 231–275 (KNNQNLHHKQQQLQQLQQLKQQHLQQQQKLKQEQQQEQQQQQEDE) are a coiled coil. The span at 257 to 271 (QQKLKQEQQQEQQQQ) shows a compositional bias: low complexity. The span at 279 to 289 (SPVSTSSTLSP) shows a compositional bias: polar residues. A Protein kinase domain is found at 369–626 (FKNLDFEARG…SSQLLQHPFL (258 aa)). Residues 375–383 (EARGGFGSV) and Lys403 contribute to the ATP site. Asp494 serves as the catalytic Proton acceptor.

This sequence belongs to the protein kinase superfamily. STE Ser/Thr protein kinase family. STE20 subfamily. Mg(2+) serves as cofactor.

The catalysed reaction is L-seryl-[protein] + ATP = O-phospho-L-seryl-[protein] + ADP + H(+). It catalyses the reaction L-threonyl-[protein] + ATP = O-phospho-L-threonyl-[protein] + ADP + H(+). This Dictyostelium discoideum (Social amoeba) protein is Probable serine/threonine-protein kinase mkcD.